Here is a 339-residue protein sequence, read N- to C-terminus: Probable cytosolic iron-sulfur protein assembly protein CIAO1 (339 aa).

WD repeat units follow at residues 14–53 (HPDS…WICK), 59–98 (GHQR…FECV), 103–142 (GHEN…EYEC), 148–187 (SHTQ…WVCC), 192–231 (GHES…NEQG), 250–289 (FHSR…DPQQ), and 301–339 (AHSQ…SEGI). Positions 176 to 178 (LYR) match the LYR motif; required for interaction with HSC20 motif.

This sequence belongs to the WD repeat CIA1 family. As to quaternary structure, component of the CIA complex. Interacts with CIAO2A and forms a complex with CIAO2B and MMS19; the interactions with CIAO2A and CIAO2B are mutually exclusive. Interacts with CHD1L, ERCC2, IREB2 and POLD1. Component of the MMXD complex, which includes CIAO1, ERCC2, CIAO2B, MMS19 and SLC25A5. Interacts with WT1. Interacts with CIAO3. Interacts (via LYR motif) with HSC20.

The protein resides in the cytoplasm. Functionally, key component of the cytosolic iron-sulfur protein assembly (CIA) complex, a multiprotein complex that mediates the incorporation of iron-sulfur cluster into extramitochondrial Fe/S proteins. As a CIA complex component, interacts specifically with CIAO2A or CIAO2B and MMS19 to assist different branches of iron-sulfur protein assembly, depending of its interactors. The complex CIAO1:CIAO2B:MMS19 binds to and facilitates the assembly of most cytosolic-nuclear Fe/S proteins. CIAO1:CIAO2A specifically matures ACO1 and stabilizes IREB2. Seems to specifically modulate the transactivation activity of WT1. As part of the mitotic spindle-associated MMXD complex it may play a role in chromosome segregation. This Bos taurus (Bovine) protein is Probable cytosolic iron-sulfur protein assembly protein CIAO1.